The following is a 1403-amino-acid chain: DNA-directed RNA polymerase subunit beta' (1403 aa).

Zn(2+) is bound by residues C70, C72, C85, and C88. Residues D461, D463, and D465 each coordinate Mg(2+). The tract at residues 687–708 (QQISQEETTGDRDGKRETRKQP) is disordered. The span at 695–706 (TGDRDGKRETRK) shows a compositional bias: basic and acidic residues. The Zn(2+) site is built by C805, C879, C886, and C889. The segment at 1381-1403 (THGDTGPLGEPSRPVGTQTTGAA) is disordered.

It belongs to the RNA polymerase beta' chain family. In terms of assembly, the RNAP catalytic core consists of 2 alpha, 1 beta, 1 beta' and 1 omega subunit. When a sigma factor is associated with the core the holoenzyme is formed, which can initiate transcription. Requires Mg(2+) as cofactor. The cofactor is Zn(2+).

It carries out the reaction RNA(n) + a ribonucleoside 5'-triphosphate = RNA(n+1) + diphosphate. Its function is as follows. DNA-dependent RNA polymerase catalyzes the transcription of DNA into RNA using the four ribonucleoside triphosphates as substrates. The protein is DNA-directed RNA polymerase subunit beta' of Myxococcus xanthus (strain DK1622).